We begin with the raw amino-acid sequence, 741 residues long: Mitofusin-1 (741 aa).

Residues 1–584 (MAETVSPLKH…AAQEELMITL (584 aa)) lie on the Cytoplasmic side of the membrane. Residues 9 to 73 (KHFVLAKKAI…LAVIGEVLSR (65 aa)) are part of a helix bundle domain, formed by helices from N-terminal and C-terminal regions. The Dynamin-type G domain maps to 72–321 (SRRHMKVAFF…ARLQEFQNFE (250 aa)). Residues 82–89 (GRTSSGKS) form a G1 motif region. A GTP-binding site is contributed by 85 to 90 (SSGKSS). Positions 108-109 (TT) are G2 motif. Residues 178-181 (DSPG) form a G3 motif region. Residue 237-240 (NRWD) coordinates GTP. The interval 237–240 (NRWD) is G4 motif. Residue Glu266 is a region of interest, G5 motif. Ser284 and Lys286 together coordinate GTP. A part of a helix bundle domain, formed by helices from N-terminal and C-terminal regions region spans residues 338–364 (EQHTIRAKQILDTVKNILDSVNVAAAE). A coiled-coil region spans residues 371–408 (EEREDQIDRLDFIRNQMNLLTLDVKKKIKEVTEEVANK). A helical membrane pass occupies residues 585 to 605 (ITGLASLTSRTSMGIIVVGGV). At 606–608 (IWK) the chain is on the mitochondrial intermembrane side. The chain crosses the membrane as a helical span at residues 609–629 (TVGWKLISVTLSMYGALYLYE). At 630–741 (RLTWTTRAKE…QFLHPSSGES (112 aa)) the chain is on the cytoplasmic side. Positions 677 to 735 (FARLCQQVDVTQKHLEEEIARLSKEIDQLEKIQNNSKLLRNKAVQLESELENFSKQFLH) form a coiled coil. The interval 703–734 (DQLEKIQNNSKLLRNKAVQLESELENFSKQFL) is part of a helix bundle domain, formed by helices from N-terminal and C-terminal regions.

Belongs to the TRAFAC class dynamin-like GTPase superfamily. Dynamin/Fzo/YdjA family. Mitofusin subfamily. In terms of assembly, homodimer, also in the absence of bound GTP. Forms higher oligomers in the presence of a transition state GTP analog. Forms homomultimers and heteromultimers with MFN2. Oligomerization is essential for mitochondrion fusion. Component of a high molecular weight multiprotein complex. Interacts with VAT1. Interacts with THG1L; THG1L probably functions as a guanyl-nucleotide exchange factor/GEF, activating MFN1. Ubiquitinated by MARCHF5. When mitochondria are depolarized and dysfunctional, it is ubiquitinated by a SCF (SKP1-CUL1-F-box protein) E3 ubiquitin-protein ligase complex that contains FBXO7 and PRKN. Ubiquitinated by non-degradative ubiquitin by PRKN, promoting mitochondrial fusion; deubiquitination by USP30 inhibits mitochondrial fusion. Detected in adult heart. Detected in embryos (at protein level). Widely expressed.

The protein resides in the mitochondrion outer membrane. It catalyses the reaction GTP + H2O = GDP + phosphate + H(+). Mitochondrial outer membrane GTPase that mediates mitochondrial clustering and fusion. Membrane clustering requires GTPase activity. It may involve a major rearrangement of the coiled coil domains. Mitochondria are highly dynamic organelles, and their morphology is determined by the equilibrium between mitochondrial fusion and fission events. Overexpression induces the formation of mitochondrial networks (in vitro). Has low GTPase activity. In Mus musculus (Mouse), this protein is Mitofusin-1 (Mfn1).